Consider the following 367-residue polypeptide: Quinolinate synthase (367 aa).

Positions 45 and 62 each coordinate iminosuccinate. Cys109 contacts [4Fe-4S] cluster. Residues 140–142 and Ser161 contribute to the iminosuccinate site; that span reads YVN. Cys229 contributes to the [4Fe-4S] cluster binding site. Iminosuccinate contacts are provided by residues 255 to 257 and Thr272; that span reads HPE. Residue Cys319 participates in [4Fe-4S] cluster binding.

It belongs to the quinolinate synthase family. Type 3 subfamily. It depends on [4Fe-4S] cluster as a cofactor.

It localises to the cytoplasm. The catalysed reaction is iminosuccinate + dihydroxyacetone phosphate = quinolinate + phosphate + 2 H2O + H(+). It participates in cofactor biosynthesis; NAD(+) biosynthesis; quinolinate from iminoaspartate: step 1/1. Its function is as follows. Catalyzes the condensation of iminoaspartate with dihydroxyacetone phosphate to form quinolinate. This Geobacillus sp. (strain WCH70) protein is Quinolinate synthase.